Reading from the N-terminus, the 160-residue chain is Cytochrome b6-f complex subunit 4 (160 aa).

Helical transmembrane passes span 36–56 (LLYV…GLAI), 95–115 (LLGV…PFIE), and 131–151 (TIFL…TMPI).

It belongs to the cytochrome b family. PetD subfamily. As to quaternary structure, the 4 large subunits of the cytochrome b6-f complex are cytochrome b6, subunit IV (17 kDa polypeptide, petD), cytochrome f and the Rieske protein, while the 4 small subunits are petG, petL, petM and petN. The complex functions as a dimer.

The protein localises to the plastid. It is found in the chloroplast thylakoid membrane. Functionally, component of the cytochrome b6-f complex, which mediates electron transfer between photosystem II (PSII) and photosystem I (PSI), cyclic electron flow around PSI, and state transitions. This is Cytochrome b6-f complex subunit 4 from Porphyra purpurea (Red seaweed).